The chain runs to 156 residues: Ribonuclease pancreatic (156 aa).

The first 28 residues, 1 to 28, serve as a signal peptide directing secretion; sequence MALEKSLALLPLLVLVLLVLGWVQPSLG. Positions 35 and 38 each coordinate substrate. His-40 functions as the Proton acceptor in the catalytic mechanism. Intrachain disulfides connect Cys-54-Cys-112, Cys-68-Cys-123, Cys-86-Cys-138, and Cys-93-Cys-100. A glycan (N-linked (GlcNAc...) asparagine) is linked at Asn-62. 69 to 73 contacts substrate; the sequence is KPVNT. Asn-90 carries an N-linked (GlcNAc...) asparagine glycan. 2 residues coordinate substrate: Lys-94 and Arg-113. His-147 acts as the Proton donor in catalysis.

This sequence belongs to the pancreatic ribonuclease family. As to quaternary structure, monomer. Interacts with and forms tight 1:1 complexes with RNH1. Dimerization of two such complexes may occur. Interaction with RNH1 inhibits this protein.

The protein resides in the secreted. The enzyme catalyses an [RNA] containing cytidine + H2O = an [RNA]-3'-cytidine-3'-phosphate + a 5'-hydroxy-ribonucleotide-3'-[RNA].. It catalyses the reaction an [RNA] containing uridine + H2O = an [RNA]-3'-uridine-3'-phosphate + a 5'-hydroxy-ribonucleotide-3'-[RNA].. Endonuclease that catalyzes the cleavage of RNA on the 3' side of pyrimidine nucleotides. Acts on single-stranded and double-stranded RNA. This Lagothrix lagotricha (Brown woolly monkey) protein is Ribonuclease pancreatic (RNASE1).